Here is a 308-residue protein sequence, read N- to C-terminus: Carbonic anhydrase 6 (308 aa).

An N-terminal signal peptide occupies residues 1–17 (MRALVLLLSLFLLGGQA). The 258-residue stretch at 21–278 (SDWTYSEGAL…LNHRVVESNF (258 aa)) folds into the Alpha-carbonic anhydrase domain. An intrachain disulfide couples Cys-42 to Cys-224. Residue Asn-67 is glycosylated (N-linked (GlcNAc...) asparagine). Residue His-85 is the Proton donor/acceptor of the active site. Zn(2+)-binding residues include His-111, His-113, and His-138. 220–221 (TT) serves as a coordination point for substrate. An N-linked (GlcNAc...) asparagine glycan is attached at Asn-256.

The protein belongs to the alpha-carbonic anhydrase family. Zn(2+) is required as a cofactor. Major constituent of saliva.

Its subcellular location is the secreted. The enzyme catalyses hydrogencarbonate + H(+) = CO2 + H2O. Its activity is regulated as follows. Inhibited by coumarins, sulfonamide derivatives such as acetazolamide (AZA), saccharin and Foscarnet (phosphonoformate trisodium salt). Reversible hydration of carbon dioxide. Its role in saliva is unknown. This chain is Carbonic anhydrase 6 (CA6), found in Homo sapiens (Human).